Here is a 118-residue protein sequence, read N- to C-terminus: Large ribosomal subunit protein uL18 (118 aa).

Residues 1–20 are disordered; the sequence is MISKPDKNKKRQRRHARVRS. Over residues 7-20 the composition is skewed to basic residues; the sequence is KNKKRQRRHARVRS.

It belongs to the universal ribosomal protein uL18 family. In terms of assembly, part of the 50S ribosomal subunit; part of the 5S rRNA/L5/L18/L25 subcomplex. Contacts the 5S and 23S rRNAs.

Its function is as follows. This is one of the proteins that bind and probably mediate the attachment of the 5S RNA into the large ribosomal subunit, where it forms part of the central protuberance. This Pediococcus pentosaceus (strain ATCC 25745 / CCUG 21536 / LMG 10740 / 183-1w) protein is Large ribosomal subunit protein uL18.